Consider the following 108-residue polypeptide: Protein YcgL (108 aa).

Positions 12-96 (MFCVIYRSSK…PPEDLLKQHL (85 aa)) constitute a YcgL domain.

The chain is Protein YcgL from Escherichia coli O17:K52:H18 (strain UMN026 / ExPEC).